The sequence spans 287 residues: Glycine--tRNA ligase alpha subunit (287 aa).

It belongs to the class-II aminoacyl-tRNA synthetase family. Tetramer of two alpha and two beta subunits.

It is found in the cytoplasm. It catalyses the reaction tRNA(Gly) + glycine + ATP = glycyl-tRNA(Gly) + AMP + diphosphate. The protein is Glycine--tRNA ligase alpha subunit of Campylobacter jejuni subsp. doylei (strain ATCC BAA-1458 / RM4099 / 269.97).